Reading from the N-terminus, the 579-residue chain is Putative laccase-9 (579 aa).

The first 27 residues, 1 to 27, serve as a signal peptide directing secretion; sequence MGTAKLPALLWLLAGVVLALAVNPAHG. 2 consecutive Plastocyanin-like domains span residues 36–152 and 162–319; these read FITE…PKRG and KEIP…YTDS. Asn41 and Asn82 each carry an N-linked (GlcNAc...) asparagine glycan. Cu cation contacts are provided by His86 and His88. A glycan (N-linked (GlcNAc...) asparagine) is linked at Asn114. His131 and His133 together coordinate Cu cation. Residues Asn307, Asn405, and Asn446 are each glycosylated (N-linked (GlcNAc...) asparagine). The Plastocyanin-like 3 domain occupies 436-563; it reads PTAFVDPPVN…DTVFIVKDGK (128 aa). The Cu cation site is built by His480, His483, and His485. Asn496 carries an N-linked (GlcNAc...) asparagine glycan. Cu cation contacts are provided by His542, Cys543, His544, His548, and Met553.

Belongs to the multicopper oxidase family. The cofactor is Cu cation.

The protein localises to the secreted. It is found in the extracellular space. It localises to the apoplast. It catalyses the reaction 4 hydroquinone + O2 = 4 benzosemiquinone + 2 H2O. Its function is as follows. Lignin degradation and detoxification of lignin-derived products. The polypeptide is Putative laccase-9 (LAC9) (Oryza sativa subsp. japonica (Rice)).